The chain runs to 91 residues: UPF0250 protein HCH_05838 (91 aa).

Belongs to the UPF0250 family.

This is UPF0250 protein HCH_05838 from Hahella chejuensis (strain KCTC 2396).